The primary structure comprises 289 residues: Eukaryotic translation initiation factor 3 subunit G (289 aa).

Disordered stretches follow at residues 1–31 (MSRL…VISN) and 151–199 (DTMA…GEKM). The 79-residue stretch at 209 to 287 (ATLRVTNVSE…LILRVEFAKK (79 aa)) folds into the RRM domain.

It belongs to the eIF-3 subunit G family. As to quaternary structure, component of the eukaryotic translation initiation factor 3 (eIF-3) complex.

It localises to the cytoplasm. In terms of biological role, RNA-binding component of the eukaryotic translation initiation factor 3 (eIF-3) complex, which is involved in protein synthesis of a specialized repertoire of mRNAs and, together with other initiation factors, stimulates binding of mRNA and methionyl-tRNAi to the 40S ribosome. The eIF-3 complex specifically targets and initiates translation of a subset of mRNAs involved in cell proliferation. This subunit can bind 18S rRNA. In Coccidioides immitis (strain RS) (Valley fever fungus), this protein is Eukaryotic translation initiation factor 3 subunit G.